The primary structure comprises 489 residues: UDP-N-acetylmuramoyl-L-alanyl-D-glutamate--2,6-diaminopimelate ligase (489 aa).

Ser32 is a binding site for UDP-N-acetyl-alpha-D-muramoyl-L-alanyl-D-glutamate. 113-119 lines the ATP pocket; that stretch reads GTNGKTT. UDP-N-acetyl-alpha-D-muramoyl-L-alanyl-D-glutamate is bound by residues 154-155, Ser181, Gln187, and Arg189; that span reads TT. The residue at position 221 (Lys221) is an N6-carboxylysine. Meso-2,6-diaminopimelate-binding positions include Arg381, 405-408, Gly456, and Glu460; that span reads DNPR. The Meso-diaminopimelate recognition motif motif lies at 405–408; the sequence is DNPR.

This sequence belongs to the MurCDEF family. MurE subfamily. Mg(2+) is required as a cofactor. In terms of processing, carboxylation is probably crucial for Mg(2+) binding and, consequently, for the gamma-phosphate positioning of ATP.

The protein resides in the cytoplasm. The catalysed reaction is UDP-N-acetyl-alpha-D-muramoyl-L-alanyl-D-glutamate + meso-2,6-diaminopimelate + ATP = UDP-N-acetyl-alpha-D-muramoyl-L-alanyl-gamma-D-glutamyl-meso-2,6-diaminopimelate + ADP + phosphate + H(+). Its pathway is cell wall biogenesis; peptidoglycan biosynthesis. Catalyzes the addition of meso-diaminopimelic acid to the nucleotide precursor UDP-N-acetylmuramoyl-L-alanyl-D-glutamate (UMAG) in the biosynthesis of bacterial cell-wall peptidoglycan. The chain is UDP-N-acetylmuramoyl-L-alanyl-D-glutamate--2,6-diaminopimelate ligase from Gloeobacter violaceus (strain ATCC 29082 / PCC 7421).